We begin with the raw amino-acid sequence, 536 residues long: Arylsulfatase K (536 aa).

The first 24 residues, 1-24, serve as a signal peptide directing secretion; the sequence is MIQKCIALSLFLFSALPEDNIVRA. Residues Asp-42 and Cys-82 each coordinate Ca(2+). Cys-82 (nucleophile) is an active-site residue. 3-oxoalanine (Cys) is present on Cys-82. Lys-130 contributes to the substrate binding site. N-linked (GlcNAc...) asparagine glycosylation occurs at Asn-195. His-253 contacts substrate. A glycan (N-linked (GlcNAc...) asparagine) is linked at Asn-264. Ca(2+)-binding residues include Asp-315 and His-316. N-linked (GlcNAc...) asparagine glycans are attached at residues Asn-377, Asn-416, and Asn-501.

Belongs to the sulfatase family. Ca(2+) is required as a cofactor. In terms of processing, the conversion to 3-oxoalanine (also known as C-formylglycine, FGly), of a serine or cysteine residue in prokaryotes and of a cysteine residue in eukaryotes, is critical for catalytic activity.

It is found in the secreted. The protein resides in the lysosome. It carries out the reaction an aryl sulfate + H2O = a phenol + sulfate + H(+). It catalyses the reaction Hydrolysis of the 2-sulfate groups of the 2-O-sulfo-D-glucuronate residues of chondroitin sulfate, heparin and heparitin sulfate.. Catalyzes the hydrolysis of pseudosubstrates such as p-nitrocatechol sulfate and p-nitrophenyl sulfate. Catalyzes the hydrolysis of the 2-sulfate groups of the 2-O-sulfo-D-glucuronate residues of chondroitin sulfate, heparin and heparitin sulfate. Acts selectively on 2-sulfoglucuronate and lacks activity against 2-sulfoiduronate. This is Arylsulfatase K (arsk) from Xenopus laevis (African clawed frog).